The primary structure comprises 179 residues: Large ribosomal subunit protein uL5 (179 aa).

It belongs to the universal ribosomal protein uL5 family. As to quaternary structure, part of the 50S ribosomal subunit; part of the 5S rRNA/L5/L18/L25 subcomplex. Contacts the 5S rRNA and the P site tRNA. Forms a bridge to the 30S subunit in the 70S ribosome.

This is one of the proteins that bind and probably mediate the attachment of the 5S RNA into the large ribosomal subunit, where it forms part of the central protuberance. In the 70S ribosome it contacts protein S13 of the 30S subunit (bridge B1b), connecting the 2 subunits; this bridge is implicated in subunit movement. Contacts the P site tRNA; the 5S rRNA and some of its associated proteins might help stabilize positioning of ribosome-bound tRNAs. This is Large ribosomal subunit protein uL5 from Lachnoclostridium phytofermentans (strain ATCC 700394 / DSM 18823 / ISDg) (Clostridium phytofermentans).